A 103-amino-acid chain; its full sequence is Putative double-stranded DNA mimic protein HD_0986 (103 aa).

This sequence belongs to the putative dsDNA mimic protein family.

May act as a double-stranded DNA (dsDNA) mimic. Probably regulates the activity of a dsDNA-binding protein. This is Putative double-stranded DNA mimic protein HD_0986 from Haemophilus ducreyi (strain 35000HP / ATCC 700724).